The following is a 176-amino-acid chain: NADH-quinone oxidoreductase subunit I 1 (176 aa).

4Fe-4S ferredoxin-type domains follow at residues 45-77 (IVLT…MEAT) and 87-116 (RWFR…MTPD). 8 residues coordinate [4Fe-4S] cluster: Cys57, Cys60, Cys63, Cys67, Cys96, Cys99, Cys102, and Cys106.

Belongs to the complex I 23 kDa subunit family. In terms of assembly, NDH-1 is composed of 14 different subunits. Subunits NuoA, H, J, K, L, M, N constitute the membrane sector of the complex. The cofactor is [4Fe-4S] cluster.

Its subcellular location is the cell inner membrane. It catalyses the reaction a quinone + NADH + 5 H(+)(in) = a quinol + NAD(+) + 4 H(+)(out). NDH-1 shuttles electrons from NADH, via FMN and iron-sulfur (Fe-S) centers, to quinones in the respiratory chain. The immediate electron acceptor for the enzyme in this species is believed to be ubiquinone. Couples the redox reaction to proton translocation (for every two electrons transferred, four hydrogen ions are translocated across the cytoplasmic membrane), and thus conserves the redox energy in a proton gradient. The sequence is that of NADH-quinone oxidoreductase subunit I 1 from Geobacter metallireducens (strain ATCC 53774 / DSM 7210 / GS-15).